Reading from the N-terminus, the 112-residue chain is T cell receptor alpha variable 9-2 (112 aa).

A signal peptide spans 1–20 (MNYSPGLVSLILLLLGRTRG). Positions 21 to 112 (DSVTQMEGPV…DSAVYFCALS (92 aa)) constitute an Ig-like domain. The N-linked (GlcNAc...) asparagine glycan is linked to N41. Residues C42 and C109 are joined by a disulfide bond.

Alpha-beta TR is a heterodimer composed of an alpha and beta chain; disulfide-linked. The alpha-beta TR is associated with the transmembrane signaling CD3 coreceptor proteins to form the TR-CD3 (TcR or TCR). The assembly of alpha-beta TR heterodimers with CD3 occurs in the endoplasmic reticulum where a single alpha-beta TR heterodimer associates with one CD3D-CD3E heterodimer, one CD3G-CD3E heterodimer and one CD247 homodimer forming a stable octameric structure. CD3D-CD3E and CD3G-CD3E heterodimers preferentially associate with TR alpha and TR beta chains, respectively. The association of the CD247 homodimer is the last step of TcR assembly in the endoplasmic reticulum and is required for transport to the cell surface.

Its subcellular location is the cell membrane. Functionally, v region of the variable domain of T cell receptor (TR) alpha chain that participates in the antigen recognition. Alpha-beta T cell receptors are antigen specific receptors which are essential to the immune response and are present on the cell surface of T lymphocytes. Recognize peptide-major histocompatibility (MH) (pMH) complexes that are displayed by antigen presenting cells (APC), a prerequisite for efficient T cell adaptive immunity against pathogens. Binding of alpha-beta TR to pMH complex initiates TR-CD3 clustering on the cell surface and intracellular activation of LCK that phosphorylates the ITAM motifs of CD3G, CD3D, CD3E and CD247 enabling the recruitment of ZAP70. In turn ZAP70 phosphorylates LAT, which recruits numerous signaling molecules to form the LAT signalosome. The LAT signalosome propagates signal branching to three major signaling pathways, the calcium, the mitogen-activated protein kinase (MAPK) kinase and the nuclear factor NF-kappa-B (NF-kB) pathways, leading to the mobilization of transcription factors that are critical for gene expression and essential for T cell growth and differentiation. The T cell repertoire is generated in the thymus, by V-(D)-J rearrangement. This repertoire is then shaped by intrathymic selection events to generate a peripheral T cell pool of self-MH restricted, non-autoaggressive T cells. Post-thymic interaction of alpha-beta TR with the pMH complexes shapes TR structural and functional avidity. The chain is T cell receptor alpha variable 9-2 from Homo sapiens (Human).